The primary structure comprises 99 residues: MICOS complex subunit MIC10 (99 aa).

Helical transmembrane passes span 27–43 (RFVY…LLFF) and 50–66 (WASI…SAYT).

This sequence belongs to the MICOS complex subunit Mic10 family. In terms of assembly, component of the mitochondrial contact site and cristae organizing system (MICOS) complex. The MICOS complex associates with mitochondrial outer membrane proteins. Present in a large lipid-enriched complex called mitochondrial transmembrane lipoprotein (MTL) complex made of proteins located in the two mitochondrial membranes, including the TOM complex and the core components of the MICOS complex and containing at least digalactosyldiacylglycerol (DGDG).

Its subcellular location is the mitochondrion inner membrane. Functionally, component of the MICOS complex, a large protein complex of the mitochondrial inner membrane that plays crucial roles in the maintenance of crista junctions, inner membrane architecture, and formation of contact sites to the outer membrane. The sequence is that of MICOS complex subunit MIC10 from Arabidopsis thaliana (Mouse-ear cress).